Here is a 211-residue protein sequence, read N- to C-terminus: MKVTAAFASLLLTAFAAPAPEPVLVSRSAGINYVQNYNGNLGDFTYDESTGTFSMYWEDGVSSDFVVGLGWTTGSSKSITYSAQYSASSSSSYLAVYGWVNSPQAEYYIVEDYGDYNPCSSATSLGTVYSDGSTYQVCTDTRRTRPSITGTSTFTQYFSVRESTRTSGTVTIANHFNFWAQHGFGNSNFNYQVMAVEAWNGVGSASVTISS.

The N-terminal stretch at Met1–Ala16 is a signal peptide. One can recognise a GH11 domain in the interval Ala19–Ser210. The active-site Nucleophile is the Glu106. The active-site Proton donor is Glu197.

The protein belongs to the glycosyl hydrolase 11 (cellulase G) family.

The protein localises to the secreted. The enzyme catalyses Endohydrolysis of (1-&gt;4)-beta-D-xylosidic linkages in xylans.. Its pathway is glycan degradation; xylan degradation. Functionally, endo-1,4-beta-xylanase involved in the hydrolysis of xylan, a major structural heterogeneous polysaccharide found in plant biomass representing the second most abundant polysaccharide in the biosphere, after cellulose. In Aspergillus niger, this protein is Endo-1,4-beta-xylanase 5 (XYN5).